The following is a 403-amino-acid chain: Cytoplasmic tRNA 2-thiolation protein 2 (403 aa).

The protein belongs to the CTU2/NCS2 family.

The protein resides in the cytoplasm. The protein operates within tRNA modification; 5-methoxycarbonylmethyl-2-thiouridine-tRNA biosynthesis. Plays a central role in 2-thiolation of mcm(5)S(2)U at tRNA wobble positions of tRNA(Lys), tRNA(Glu) and tRNA(Gln). May act by forming a heterodimer with NCS6/CTU1 that ligates sulfur from thiocarboxylated URM1 onto the uridine of tRNAs at wobble position. The chain is Cytoplasmic tRNA 2-thiolation protein 2 from Drosophila ananassae (Fruit fly).